The sequence spans 97 residues: Exodeoxyribonuclease 7 small subunit (97 aa).

Residues 1–22 (MAKTASPGATPPGNGTEPLPDN) form a disordered region.

This sequence belongs to the XseB family. In terms of assembly, heterooligomer composed of large and small subunits.

The protein localises to the cytoplasm. The enzyme catalyses Exonucleolytic cleavage in either 5'- to 3'- or 3'- to 5'-direction to yield nucleoside 5'-phosphates.. In terms of biological role, bidirectionally degrades single-stranded DNA into large acid-insoluble oligonucleotides, which are then degraded further into small acid-soluble oligonucleotides. The protein is Exodeoxyribonuclease 7 small subunit of Burkholderia cenocepacia (strain HI2424).